Consider the following 954-residue polypeptide: SWI/SNF-related matrix-associated actin-dependent regulator of chromatin subfamily A-like protein 1 (954 aa).

2 disordered regions span residues 1–20 and 27–238; these read MSLP…RQKA and KLLA…NSQK. Ser2 is subject to N-acetylserine. Residues 3-34 are a coiled coil; it reads LPLTEEQRKKIEENRQKALARRAEKLLAEQHQ. The interval 5–30 is mediates interaction with RPA2; the sequence is LTEEQRKKIEENRQKALARRAEKLLA. The segment covering 7-20 has biased composition (basic and acidic residues); sequence EEQRKKIEENRQKA. A compositionally biased stretch (polar residues) spans 72-83; it reads KQQNLSSSSNAD. Ser112, Ser123, Ser129, and Ser151 each carry phosphoserine. 2 stretches are compositionally biased toward polar residues: residues 171–183 and 197–238; these read KSSQ…SSGQ and ASPS…NSQK. Ser198 carries the phosphoserine modification. 2 consecutive HARP domains span residues 226-303 and 327-398; these read SGSS…QPLE and SLSF…DPLP. One can recognise a Helicase ATP-binding domain in the interval 445-600; that stretch reads NFAIAKGGRL…YTQIIAVKPT (156 aa). 458 to 465 serves as a coordination point for ATP; sequence DDMGLGKT. Residues 549 to 552 carry the DESH box motif; that stretch reads DESH. Residues 644-661 carry the Nuclear localization signal motif; the sequence is RRLKSDVLSQLPAKQRKI. Residues 716 to 869 enclose the Helicase C-terminal domain; sequence YILDLLESGR…ETNFSEMTES (154 aa). The interval 904–934 is disordered; it reads ESFDPGSASGTSGSSSQNMGDTLDESSLTAS. Over residues 909-919 the composition is skewed to low complexity; the sequence is GSASGTSGSSS. Over residues 920 to 934 the composition is skewed to polar residues; sequence QNMGDTLDESSLTAS.

It belongs to the SNF2/RAD54 helicase family. SMARCAL1 subfamily. In terms of assembly, interacts with RPA2; the interaction is direct and mediates the recruitment by the RPA complex of SMARCAL1 to sites of DNA damage. DNA damage-regulated phosphorylation by kinases that may include ATM, ATR and PRKDC. As to expression, ubiquitously expressed, with high levels in testis.

The protein resides in the nucleus. The enzyme catalyses ATP + H2O = ADP + phosphate + H(+). Functionally, ATP-dependent annealing helicase that binds selectively to fork DNA relative to ssDNA or dsDNA and catalyzes the rewinding of the stably unwound DNA. Rewinds single-stranded DNA bubbles that are stably bound by replication protein A (RPA). Acts throughout the genome to reanneal stably unwound DNA, performing the opposite reaction of many enzymes, such as helicases and polymerases, that unwind DNA. May play an important role in DNA damage response by acting at stalled replication forks. The sequence is that of SWI/SNF-related matrix-associated actin-dependent regulator of chromatin subfamily A-like protein 1 from Homo sapiens (Human).